We begin with the raw amino-acid sequence, 541 residues long: Neutral amino acid transporter B(0) (541 aa).

Residue M1 is modified to N-acetylmethionine. The Cytoplasmic segment spans residues 1–51 (MVADPPRDSKGLAAAEPTANGGLALASIEDQGAAAGGYCGSRDQVRRCLRA). A helical membrane pass occupies residues 52–81 (NLLVLLTVVAVVAGVALGLGVSGAGGALAL). Over 82 to 94 (GPERLSAFVFPGE) the chain is Extracellular. A helical transmembrane segment spans residues 95–116 (LLLRLLRMIILPLVVCSLIGGA). Topologically, residues 117–130 (ASLDPGALGRLGAW) are cytoplasmic. Residues 131-153 (ALLFFLVTTLLASALGVGLALAL) form a helical membrane-spanning segment. Over 154-224 (QPGAASAAIN…GTRVKVPVGQ (71 aa)) the chain is Extracellular. N163 and N212 each carry an N-linked (GlcNAc...) asparagine glycan. The chain crosses the membrane as a helical span at residues 225-248 (EVEGMNILGLVVFAIVFGVALRKL). The Cytoplasmic segment spans residues 249 to 257 (GPEGELLIR). The chain crosses the membrane as a helical span at residues 258–285 (FFNSFNEATMVLVSWIMWYAPVGIMFLV). Residues 286–306 (AGKIVEMEDVGLLFARLGKYI) are Extracellular-facing. A helical transmembrane segment spans residues 307–328 (LCCLLGHAIHGLLVLPLIYFLF). At 329–333 (TRKNP) the chain is on the cytoplasmic side. The discontinuously helical intramembrane region spans 334-364 (YRFLWGIVTPLATAFGTSSSSATLPLMMKCV). Over 365 to 373 (EENNGVAKH) the chain is Cytoplasmic. A helical transmembrane segment spans residues 374–400 (ISRFILPIGATVNMDGAALFQCVAAVF). G382, T384, and N386 together coordinate Na(+). Over 401–413 (IAQLSQQSLDFVK) the chain is Extracellular. An intramembrane region (discontinuously helical) is located at residues 414–447 (IITILVTATASSVGAAGIPAGGVLTLAIILEAVN). Over 448-460 (LPVDHISLILAVD) the chain is Extracellular. Residues 461-482 (WLVDRSCTVLNVEGDALGAGLL) form a helical membrane-spanning segment. 2 residues coordinate Na(+): N471 and D475. The Cytoplasmic segment spans residues 483–541 (QNYVDRTESRSTEPELIQVKSELPLDPLPVPTEEGNPLLKHYRGPAGDATVASEKESVM). S493 is modified (phosphoserine). The residue at position 494 (T494) is a Phosphothreonine. Residues S503, S535, and S539 each carry the phosphoserine modification. Residues 511-541 (PVPTEEGNPLLKHYRGPAGDATVASEKESVM) are disordered.

Belongs to the dicarboxylate/amino acid:cation symporter (DAACS) (TC 2.A.23) family. SLC1A5 subfamily. As to quaternary structure, homotrimer. Interacts with ERVH48-1/suppressyn; may negatively regulate syncytialization. In terms of tissue distribution, placenta, lung, skeletal muscle, kidney, pancreas, and intestine. Expressed in CD34-positive hematopoietic progenitors (at protein level).

It is found in the cell membrane. The protein resides in the melanosome. The catalysed reaction is L-glutamine(out) + L-serine(in) + Na(+)(out) = L-glutamine(in) + L-serine(out) + Na(+)(in). It carries out the reaction L-glutamine(in) + L-serine(out) + Na(+)(out) = L-glutamine(out) + L-serine(in) + Na(+)(in). The enzyme catalyses L-threonine(in) + L-glutamine(out) + Na(+)(out) = L-threonine(out) + L-glutamine(in) + Na(+)(in). It catalyses the reaction L-threonine(out) + L-glutamine(in) + Na(+)(out) = L-threonine(in) + L-glutamine(out) + Na(+)(in). The catalysed reaction is L-asparagine(in) + L-glutamine(out) + Na(+)(out) = L-asparagine(out) + L-glutamine(in) + Na(+)(in). It carries out the reaction L-asparagine(out) + L-glutamine(in) + Na(+)(out) = L-asparagine(in) + L-glutamine(out) + Na(+)(in). The enzyme catalyses L-glutamine(in) + L-alanine(out) + Na(+)(out) = L-glutamine(out) + L-alanine(in) + Na(+)(in). It catalyses the reaction L-valine(out) + L-glutamine(in) + Na(+)(out) = L-valine(in) + L-glutamine(out) + Na(+)(in). The catalysed reaction is L-glutamine(in) + L-methionine(out) + Na(+)(out) = L-glutamine(out) + L-methionine(in) + Na(+)(in). It carries out the reaction L-glutamine(in) + L-glutamate(out) + Na(+)(out) + H(+)(out) = L-glutamine(out) + L-glutamate(in) + Na(+)(in) + H(+)(in). The enzyme catalyses D-serine(in) + L-glutamine(out) + Na(+)(out) = D-serine(out) + L-glutamine(in) + Na(+)(in). It catalyses the reaction D-serine(in) + L-alanine(out) + Na(+)(out) = D-serine(out) + L-alanine(in) + Na(+)(in). The catalysed reaction is nitrate(in) = nitrate(out). It carries out the reaction iodide(out) = iodide(in). The enzyme catalyses thiocyanate(in) = thiocyanate(out). Its activity is regulated as follows. Regulated by L-cysteine, which can either inhibit substrate influx or trigger substrate efflux without being transported itself. In terms of biological role, sodium-coupled antiporter of neutral amino acids. In a tri-substrate transport cycle, exchanges neutral amino acids between the extracellular and intracellular compartments, coupled to the inward cotransport of at least one sodium ion. The preferred substrate is the essential amino acid L-glutamine, a precursor for biosynthesis of proteins, nucleotides and amine sugars as well as an alternative fuel for mitochondrial oxidative phosphorylation. Exchanges L-glutamine with other neutral amino acids such as L-serine, L-threonine and L-asparagine in a bidirectional way. Provides L-glutamine to proliferating stem and activated cells driving the metabolic switch toward cell differentiation. The transport cycle is usually pH-independent, with the exception of L-glutamate. Transports extracellular L-glutamate coupled to the cotransport of one proton and one sodium ion in exchange for intracellular L-glutamine counter-ion. May provide for L-glutamate uptake in glial cells regulating glutamine/glutamate cycle in the nervous system. Can transport D-amino acids. Mediates D-serine release from the retinal glia potentially affecting NMDA receptor function in retinal neurons. Displays sodium- and amino acid-dependent but uncoupled channel-like anion conductance with a preference SCN(-) &gt;&gt; NO3(-) &gt; I(-) &gt; Cl(-). Through binding of the fusogenic protein syncytin-1/ERVW-1 may mediate trophoblasts syncytialization, the spontaneous fusion of their plasma membranes, an essential process in placental development. Its function is as follows. (Microbial infection) Acts as a cell surface receptor for Feline endogenous virus RD114. (Microbial infection) Acts as a cell surface receptor for Baboon M7 endogenous virus. Functionally, (Microbial infection) Acts as a cell surface receptor for type D simian retroviruses. This Homo sapiens (Human) protein is Neutral amino acid transporter B(0).